Consider the following 370-residue polypeptide: DNA replication and repair protein RecF (370 aa).

30 to 37 provides a ligand contact to ATP; that stretch reads GENAQGKT.

This sequence belongs to the RecF family.

The protein localises to the cytoplasm. The RecF protein is involved in DNA metabolism; it is required for DNA replication and normal SOS inducibility. RecF binds preferentially to single-stranded, linear DNA. It also seems to bind ATP. The sequence is that of DNA replication and repair protein RecF from Listeria welshimeri serovar 6b (strain ATCC 35897 / DSM 20650 / CCUG 15529 / CIP 8149 / NCTC 11857 / SLCC 5334 / V8).